The following is a 227-amino-acid chain: MSKEIPTPYMWSYQPQMGLAAGAAQDYSTRINYMSAGPHMISRVNGIRAHRNRILLEQAAITTTPRNNLNPRSWPAALVYQESPAPTTVVLPRDAQAEVQMTNSGAQLAGGFRHRVRSPGQGITHLTIRGRGIQLNDESVSSSLGLRPDGTFQIGGAGRPSFTPRQAILTLQTSSSEPRSGGIGTLQFIEEFVPSVYFNPFSGPPGHYPDQFIPNFDAVKDSADGYD.

Thr64 is subject to Phosphothreonine; by host. Residues 112–157 constitute a propeptide that is removed on maturation; it reads FRHRVRSPGQGITHLTIRGRGIQLNDESVSSSLGLRPDGTFQIGGA. A phosphoserine; by host mark is found at Ser118 and Ser174.

It belongs to the adenoviridae hexon-linking protein family. In terms of assembly, interacts with the peripentonal hexons as well as the hexons in the facets. Part of a complex composed of the core-capsid bridging protein, the endosome lysis protein VI and the hexon-linking protein VIII; these interactions bridge the virus core to the capsid. In terms of processing, cleaved by the viral protease during virion maturation. May cause the middle segment to be shed from the capsid.

It is found in the virion. It localises to the host nucleus. Structural component of the virion that acts as a cement protein on the capsid interior and which glue the peripentonal hexons and group-of-nine hexons together. This chain is Pre-hexon-linking protein VIII, found in Human adenovirus C serotype 5 (HAdV-5).